The following is a 353-amino-acid chain: Probable dual-specificity RNA methyltransferase RlmN (353 aa).

Catalysis depends on Glu-104, which acts as the Proton acceptor. The Radical SAM core domain maps to 112-341 (DGGRKTICIS…ILNRRSPGKD (230 aa)). Cysteines 119 and 346 form a disulfide. The [4Fe-4S] cluster site is built by Cys-126, Cys-130, and Cys-133. Residues 173–174 (GE), Ser-205, 228–230 (SLN), and Asn-304 contribute to the S-adenosyl-L-methionine site. Cys-346 (S-methylcysteine intermediate) is an active-site residue.

Belongs to the radical SAM superfamily. RlmN family. [4Fe-4S] cluster serves as cofactor.

It localises to the cytoplasm. The enzyme catalyses adenosine(2503) in 23S rRNA + 2 reduced [2Fe-2S]-[ferredoxin] + 2 S-adenosyl-L-methionine = 2-methyladenosine(2503) in 23S rRNA + 5'-deoxyadenosine + L-methionine + 2 oxidized [2Fe-2S]-[ferredoxin] + S-adenosyl-L-homocysteine. It catalyses the reaction adenosine(37) in tRNA + 2 reduced [2Fe-2S]-[ferredoxin] + 2 S-adenosyl-L-methionine = 2-methyladenosine(37) in tRNA + 5'-deoxyadenosine + L-methionine + 2 oxidized [2Fe-2S]-[ferredoxin] + S-adenosyl-L-homocysteine. Specifically methylates position 2 of adenine 2503 in 23S rRNA and position 2 of adenine 37 in tRNAs. In Leptospira interrogans serogroup Icterohaemorrhagiae serovar Lai (strain 56601), this protein is Probable dual-specificity RNA methyltransferase RlmN.